Reading from the N-terminus, the 247-residue chain is Cell division protein ZapD (247 aa).

Belongs to the ZapD family. As to quaternary structure, interacts with FtsZ.

The protein localises to the cytoplasm. In terms of biological role, cell division factor that enhances FtsZ-ring assembly. Directly interacts with FtsZ and promotes bundling of FtsZ protofilaments, with a reduction in FtsZ GTPase activity. This chain is Cell division protein ZapD, found in Escherichia coli O17:K52:H18 (strain UMN026 / ExPEC).